We begin with the raw amino-acid sequence, 493 residues long: Adenylyltransferase and sulfurtransferase uba4 (493 aa).

ATP contacts are provided by residues Gly-99, Asp-120, 127–131 (SNLHR), Lys-144, and 188–189 (DN). Zn(2+) is bound by residues Cys-237 and Cys-240. The active-site Glycyl thioester intermediate; for adenylyltransferase activity is the Cys-254. Cys-316 and Cys-319 together coordinate Zn(2+). Residues 376 to 491 (INKEPTIIDV…WREQIDPDWP (116 aa)) enclose the Rhodanese domain. Residue Cys-446 is the Cysteine persulfide intermediate; for sulfurtransferase activity of the active site.

This sequence in the N-terminal section; belongs to the HesA/MoeB/ThiF family. UBA4 subfamily. Zn(2+) is required as a cofactor.

It localises to the cytoplasm. Its subcellular location is the cytosol. The catalysed reaction is [molybdopterin-synthase sulfur-carrier protein]-C-terminal Gly-Gly + ATP + H(+) = [molybdopterin-synthase sulfur-carrier protein]-C-terminal Gly-Gly-AMP + diphosphate. It carries out the reaction [molybdopterin-synthase sulfur-carrier protein]-C-terminal Gly-Gly-AMP + S-sulfanyl-L-cysteinyl-[cysteine desulfurase] + AH2 = [molybdopterin-synthase sulfur-carrier protein]-C-terminal-Gly-aminoethanethioate + L-cysteinyl-[cysteine desulfurase] + A + AMP + 2 H(+). The protein operates within tRNA modification; 5-methoxycarbonylmethyl-2-thiouridine-tRNA biosynthesis. It functions in the pathway cofactor biosynthesis; molybdopterin biosynthesis. Plays a central role in 2-thiolation of mcm(5)S(2)U at tRNA wobble positions of cytosolic tRNA(Lys), tRNA(Glu) and tRNA(Gln). Also essential during biosynthesis of the molybdenum cofactor. Acts by mediating the C-terminal thiocarboxylation of sulfur carriers urm1 and mocs2a. Its N-terminus first activates urm1 and mocs2a as acyl-adenylates (-COAMP), then the persulfide sulfur on the catalytic cysteine is transferred to urm1 and mocs2a to form thiocarboxylation (-COSH) of their C-terminus. The reaction probably involves hydrogen sulfide that is generated from the persulfide intermediate and that acts as a nucleophile towards urm1 and mocs2a. Subsequently, a transient disulfide bond is formed. Does not use thiosulfate as sulfur donor; nfs1 probably acting as a sulfur donor for thiocarboxylation reactions. The chain is Adenylyltransferase and sulfurtransferase uba4 from Aspergillus fumigatus (strain ATCC MYA-4609 / CBS 101355 / FGSC A1100 / Af293) (Neosartorya fumigata).